Consider the following 120-residue polypeptide: uncharacterized protein (120 aa).

This sequence to M.jannaschii MJ1503.

This is an uncharacterized protein from Methanocaldococcus jannaschii (strain ATCC 43067 / DSM 2661 / JAL-1 / JCM 10045 / NBRC 100440) (Methanococcus jannaschii).